The following is a 445-amino-acid chain: Histone acetyltransferase of the MYST family 2 (445 aa).

Polar residues predominate over residues 1–23 (MGSSANTETNGNAPPPSSNQKPP). The segment at 1–58 (MGSSANTETNGNAPPPSSNQKPPATNGVDGSHPPPPPLTPDQAIIESDPSKKRKMGML) is disordered. The region spanning 60 to 118 (LEVGTRVMCRWRDGKHHPVKVIERRRIHNGGQNDYEYYVHYTEFNRRLDEWTQLDQLDL) is the Tudor-knot domain. The MYST-type HAT domain maps to 169–440 (TKVKNISTIE…VDASKLIWTP (272 aa)). Residues 202 to 227 (LFFCEFCLNFMKRKEQLQRHMRKCDL) form a C2HC MYST-type zinc finger. The residue at position 269 (K269) is an N6-acetyllysine; by autocatalysis. Acetyl-CoA is bound by residues 312-314 (ILT) and 319-325 (QRKGYGK). E345 functions as the Proton donor/acceptor in the catalytic mechanism. S349 is an acetyl-CoA binding site.

It belongs to the MYST (SAS/MOZ) family. In terms of assembly, interacts with MRG1 and MRG2. Autoacetylation at Lys-269 is required for proper function. As to expression, expressed in cotyledons, leaves, stems, roots and, at higher levels in developing flowers, particularly in the anthers and gynoecia. Constitutively expressed in all tissues, predominantly in shoot apical meristem.

The protein resides in the nucleus. The catalysed reaction is L-lysyl-[protein] + acetyl-CoA = N(6)-acetyl-L-lysyl-[protein] + CoA + H(+). Functionally, histone acetyltransferase which may be involved in transcriptional activation. Acetylates 'Lys-5' of histone H4 (H4K5ac). Essential for gametophyte development. Negative regulator of flowering controlling the H4K5ac levels in the FLC chromatin. This chain is Histone acetyltransferase of the MYST family 2, found in Arabidopsis thaliana (Mouse-ear cress).